The primary structure comprises 249 residues: Uridylate kinase (249 aa).

23–26 (KISG) is a binding site for ATP. The involved in allosteric activation by GTP stretch occupies residues 31–36 (GDQGFG). Residue Gly65 coordinates UMP. 2 residues coordinate ATP: Gly66 and Arg70. UMP contacts are provided by residues Asp85 and 146 to 153 (TGNPYFTT). ATP-binding residues include Thr173, Tyr179, and Asp182.

The protein belongs to the UMP kinase family. Homohexamer.

The protein resides in the cytoplasm. It catalyses the reaction UMP + ATP = UDP + ADP. The protein operates within pyrimidine metabolism; CTP biosynthesis via de novo pathway; UDP from UMP (UMPK route): step 1/1. Its activity is regulated as follows. Allosterically activated by GTP. Inhibited by UTP. Catalyzes the reversible phosphorylation of UMP to UDP. The polypeptide is Uridylate kinase (Jannaschia sp. (strain CCS1)).